An 822-amino-acid polypeptide reads, in one-letter code: Nucleolar complex protein 3 (822 aa).

3 disordered regions span residues 1–86, 106–142, and 172–199; these read MGTK…DGDD, ANKRKRKAKTTGENDPDQGQSIGLERAYASDTKKEQD, and KPKQKKKNEEEEEDDSEEDGDTEYEDSD. The span at 13 to 23 shows a compositional bias: basic residues; that stretch reads RAAHLKSKKTP. Over residues 35 to 45 the composition is skewed to basic and acidic residues; that stretch reads KRDQLKSKREQ. The Nuclear localization signal signature appears at 41-48; it reads SKREQGQN. Residues 76-86 show a composition bias toward acidic residues; that stretch reads PLEEDNEDGDD. Positions 116–126 are enriched in polar residues; sequence TGENDPDQGQS. A compositionally biased stretch (acidic residues) spans 181–199; it reads EEEEDDSEEDGDTEYEDSD. Serine 187 is modified (phosphoserine). Residue threonine 193 is modified to Phosphothreonine. Serine 198 is subject to Phosphoserine. A coiled-coil region spans residues 445–509; sequence KIKNVNLDAE…NKQAKHQKLT (65 aa).

This sequence belongs to the CBF/MAK21 family.

It localises to the nucleus. Its subcellular location is the nucleolus. This Drosophila melanogaster (Fruit fly) protein is Nucleolar complex protein 3.